Reading from the N-terminus, the 409-residue chain is Phospholipase ABHD3 (409 aa).

Residues 26–46 (GFFGSGVGLSLILGFSVAYAF) traverse the membrane as a helical; Signal-anchor for type II membrane protein segment. One can recognise an AB hydrolase-1 domain in the interval 140–233 (PTILLLPGLT…MLLLNYLGKI (94 aa)). Active-site charge relay system residues include Ser-220, Asp-346, and His-375.

This sequence belongs to the AB hydrolase superfamily. AB hydrolase 4 family.

It localises to the membrane. It catalyses the reaction a 1,2-diacyl-sn-glycero-3-phosphocholine + H2O = a 1-acyl-sn-glycero-3-phosphocholine + a fatty acid + H(+). The catalysed reaction is a 1,2-diacyl-sn-glycero-3-phosphocholine + H2O = a 2-acyl-sn-glycero-3-phosphocholine + a fatty acid + H(+). It carries out the reaction 1-tetradecanoyl-2-(9Z,12Z-octadecadienoyl)-sn-glycero-3-phosphocholine + H2O = 2-(9Z,12Z-octadecadienoyl)-sn-glycero-3-phosphocholine + tetradecanoate + H(+). The enzyme catalyses 1-tetradecanoyl-2-(9Z,12Z-octadecadienoyl)-sn-glycero-3-phosphocholine + H2O = 1-tetradecanoyl-sn-glycero-3-phosphocholine + (9Z,12Z)-octadecadienoate + H(+). It catalyses the reaction 1-tetradecanoyl-2-(5Z,8Z,11Z,14Z-eicosatetraenoyl)-sn-glycero-3-phosphocholine + H2O = 2-(5Z,8Z,11Z,14Z)-eicosatetraenoyl-sn-glycero-3-phosphocholine + tetradecanoate + H(+). The catalysed reaction is 1-tetradecanoyl-2-(4Z,7Z,10Z,13Z,16Z,19Z-docosahexaenoyl)-sn-glycero-3-phosphocholine + H2O = 2-(4Z,7Z,10Z,13Z,16Z,19Z-docosahexaenoyl)-sn-glycero-3-phosphocholine + tetradecanoate + H(+). It carries out the reaction 1,2-ditetradecanoyl-sn-glycero-3-phosphocholine + H2O = 2-tetradecanoyl-sn-glycero-3-phosphocholine + tetradecanoate + H(+). The enzyme catalyses 1-octadecanoyl-2-acetyl-sn-glycero-3-phosphocholine + H2O = 1-octadecanoyl-sn-glycero-3-phosphocholine + acetate + H(+). It catalyses the reaction 1,2-ditetradecanoyl-sn-glycero-3-phosphocholine + H2O = 1-tetradecanoyl-sn-glycero-3-phosphocholine + tetradecanoate + H(+). The catalysed reaction is 1-octadecanoyl-2-pentanoyl-sn-glycero-3-phosphocholine + H2O = pentanoate + 1-octadecanoyl-sn-glycero-3-phosphocholine + H(+). It carries out the reaction 1-octadecanoyl-2-hexanoyl-sn-glycero-3-phosphocholine + H2O = hexanoate + 1-octadecanoyl-sn-glycero-3-phosphocholine + H(+). The enzyme catalyses 1-octadecanoyl-2-octanoyl-sn-glycero-3-phosphocholine + H2O = 1-octadecanoyl-sn-glycero-3-phosphocholine + octanoate + H(+). It catalyses the reaction 1-octadecanoyl-2-nonanoyl-sn-glycero-3-phosphocholine + H2O = nonanoate + 1-octadecanoyl-sn-glycero-3-phosphocholine + H(+). The catalysed reaction is 1-O-hexadecyl-2-nonadioyl-sn-glycero-3-phosphocholine + H2O = nonanedioate + 1-O-hexadecyl-sn-glycero-3-phosphocholine + H(+). It carries out the reaction 1-hexadecanoyl-2-nonadioyl-sn-glycero-3-phosphocholine + H2O = nonanedioate + 1-hexadecanoyl-sn-glycero-3-phosphocholine + H(+). The enzyme catalyses 1-hexadecanoyl-2-(9-oxononanoyl)-sn-glycero-3-phosphocholine + H2O = 9-oxononanoate + 1-hexadecanoyl-sn-glycero-3-phosphocholine + H(+). It catalyses the reaction 1-hexadecanoyl-2-(5-oxopentanoyl)-sn-glycero-3-phosphocholine + H2O = 5-oxopentanoate + 1-hexadecanoyl-sn-glycero-3-phosphocholine + H(+). The catalysed reaction is 1-hexadecanoyl-2-glutaroyl-sn-glycero-3-phosphocholine + H2O = glutarate + 1-hexadecanoyl-sn-glycero-3-phosphocholine + H(+). It carries out the reaction 1-O-hexadecyl-2-acetyl-sn-glycero-3-phosphocholine + H2O = 1-O-hexadecyl-sn-glycero-3-phosphocholine + acetate + H(+). Phospholipase that may play a role in phospholipids remodeling. May selectively cleave myristate (C14)-containing phosphatidylcholines through its predominant phospholipase 1 activity, cleaving preferentially acyl groups in sn1 position. In parallel, may have a minor phospholipase 2 activity acting on acyl groups in position sn2. In addition to (C14)-containing phosphatidylcholines, may also act on other medium-chain-containing and oxidatively truncated phospholipids. The polypeptide is Phospholipase ABHD3 (Homo sapiens (Human)).